Here is a 478-residue protein sequence, read N- to C-terminus: Ankyrin repeat and BTB/POZ domain-containing protein 1 (478 aa).

ANK repeat units follow at residues 1–31 (MDTS…EVNV) and 35–64 (WDST…RCEA). BTB domains follow at residues 115–182 (SDVV…DIGV) and 272–346 (PDIC…ELPP). Positions 451 to 477 (VQTYSAIEEAQQRLRALEDLLVSIGLD) form a coiled coil.

The protein resides in the cytoplasm. May act as a mediator of the PTEN growth-suppressive signaling pathway. May play a role in developmental processes. This Mus musculus (Mouse) protein is Ankyrin repeat and BTB/POZ domain-containing protein 1.